The sequence spans 874 residues: Endothelial PAS domain-containing protein 1 (874 aa).

Residues 1–23 (MTADKEKKRSSSELRKEKSRDAA) form a disordered region. The region spanning 14–67 (LRKEKSRDAARCRRSKETEVFYELAHELPLPHSVSSHLDKASIMRLAISFLRTH) is the bHLH domain. Positions 26 to 53 (RRSKETEVFYELAHELPLPHSVSSHLDK) are DNA-binding. A PAS 1 domain is found at 84-154 (DQQMDNLYLK…ENLTLKNGSG (71 aa)). The required for heterodimer formation with ARNT stretch occupies residues 171–192 (RMKCTVTNRGRTVNLKSATWKV). A PAS 2 domain is found at 230-300 (QHPSHMDIPL…KSHQNLCTKG (71 aa)). Residues 304-347 (SGQYRMLAKHGGYVWLETQGTVIYNPRNLQPQCIMCVNYVLSEI) form the PAC domain. Pro-405 carries the post-translational modification 4-hydroxyproline. The tract at residues 438-489 (WVSGLRSHSAQSESGSLPAFTVPQADTPGNTTPSASSSSSCSTPSSPEDYYS) is disordered. Positions 443–452 (RSHSAQSESG) are enriched in polar residues. The segment covering 464–484 (TPGNTTPSASSSSSCSTPSSP) has biased composition (low complexity). Residues 495–541 (LKIEVIEKLFAMDTEPRDPGSTQTDFSELDLETLAPYIPMDGEDFQL) form an NTAD region. A 4-hydroxyproline modification is found at Pro-530. Positions 777–803 (LGQPLRHLPPPQPPSTRSSGENAKTGF) are disordered. Positions 834–874 (SFEPYLLPELTRYDCEVNVPVPGSSTLLQGRDLLRALDQAT) are CTAD. Thr-844 carries the post-translational modification Phosphothreonine. A (3S)-3-hydroxyasparagine modification is found at Asn-851.

In terms of assembly, interacts with HIF3A isoform 2. Efficient DNA binding requires dimerization with another bHLH protein. Heterodimerizes with ARNT; heterodimer binds to core DNA sequence 5'-TACGTG-3' within the hypoxia response element (HRE) of target gene promoters. Interacts with CREBBP. Interacts with EGLN1. Interacts with VHL. In terms of processing, in normoxia, is probably hydroxylated on Pro-405 and Pro-530 by EGLN1/PHD1, EGLN2/PHD2 and/or EGLN3/PHD3. The hydroxylated prolines promote interaction with VHL, initiating rapid ubiquitination and subsequent proteasomal degradation. Under hypoxia, proline hydroxylation is impaired and ubiquitination is attenuated, resulting in stabilization. In normoxia, is hydroxylated on Asn-851 by HIF1AN thus probably abrogating interaction with CREBBP and EP300 and preventing transcriptional activation. Post-translationally, phosphorylated on multiple sites in the CTAD. In terms of processing, the iron and 2-oxoglutarate dependent 3-hydroxylation of asparagine is (S) stereospecific within HIF CTAD domains. In terms of tissue distribution, expressed in most tissues, with highest levels in lung, followed by heart, kidney, brain and liver. Predominantly expressed in endothelial cells. Also found in smooth muscle cells of the uterus, neurons, and brown adipose tissue. High expression in embryonic choroid plexus and kidney glomeruli.

It localises to the nucleus. Its subcellular location is the nucleus speckle. Its function is as follows. Transcription factor involved in the induction of oxygen regulated genes. Heterodimerizes with ARNT; heterodimer binds to core DNA sequence 5'-TACGTG-3' within the hypoxia response element (HRE) of target gene promoters. Regulates the vascular endothelial growth factor (VEGF) expression and seems to be implicated in the development of blood vessels and the tubular system of lung. May also play a role in the formation of the endothelium that gives rise to the blood brain barrier. Potent activator of the Tie-2 tyrosine kinase expression. Activation requires recruitment of transcriptional coactivators such as CREBBP and probably EP300. Interaction with redox regulatory protein APEX seems to activate CTAD. The sequence is that of Endothelial PAS domain-containing protein 1 (Epas1) from Mus musculus (Mouse).